A 421-amino-acid polypeptide reads, in one-letter code: MFTRNMTIADYDPVLWQAIQDENRRQEEHIELIASENYASPRVMEAQGSQFTNKYAEGYPGKRYYGGCEYADIVEQLAIDRAKELFGADYVNVQPHSGSQANAAVYGALINAGDTILGMDLAHGGHLTHGAKVSFSGKIYNSVLYGITADGLIDYEDVRQKALECKPKLIVAGFSAYSQVVDWAKMREIADEVGAYLFVDMAHVAGLIAAGLYPNPLPHAHVVTTTTHKTLGGPRGGLILSSCGDEEIYKKLQSSVFPANQGGPLVHIIAAKAVCFKEALEPQYKEYQANVIKNAKAMVEVFKQRGYDVVSNGTENHLFLVSFIKQGLTGKAADAALGKANITVNKNAVPNDPQKPFVTSGIRVGTPSVTRRGSNENDVRELAGWMCDVLDALGKENEEQVIAETKEKVLAICKRLPVYPK.

(6S)-5,6,7,8-tetrahydrofolate contacts are provided by residues leucine 121 and 125–127; that span reads GHL. N6-(pyridoxal phosphate)lysine is present on lysine 229.

This sequence belongs to the SHMT family. As to quaternary structure, homodimer. The cofactor is pyridoxal 5'-phosphate.

It is found in the cytoplasm. The catalysed reaction is (6R)-5,10-methylene-5,6,7,8-tetrahydrofolate + glycine + H2O = (6S)-5,6,7,8-tetrahydrofolate + L-serine. Its pathway is one-carbon metabolism; tetrahydrofolate interconversion. The protein operates within amino-acid biosynthesis; glycine biosynthesis; glycine from L-serine: step 1/1. Its function is as follows. Catalyzes the reversible interconversion of serine and glycine with tetrahydrofolate (THF) serving as the one-carbon carrier. This reaction serves as the major source of one-carbon groups required for the biosynthesis of purines, thymidylate, methionine, and other important biomolecules. Also exhibits THF-independent aldolase activity toward beta-hydroxyamino acids, producing glycine and aldehydes, via a retro-aldol mechanism. In Haemophilus influenzae (strain PittEE), this protein is Serine hydroxymethyltransferase.